A 278-amino-acid chain; its full sequence is 3-methyl-2-oxobutanoate hydroxymethyltransferase (278 aa).

Residues Asp43 and Asp82 each coordinate Mg(2+). Residues 43-44 (DS), Asp82, and Lys112 contribute to the 3-methyl-2-oxobutanoate site. A Mg(2+)-binding site is contributed by Glu114. Glu181 (proton acceptor) is an active-site residue.

The protein belongs to the PanB family. Homodecamer; pentamer of dimers. Mg(2+) is required as a cofactor.

The protein localises to the cytoplasm. It catalyses the reaction 3-methyl-2-oxobutanoate + (6R)-5,10-methylene-5,6,7,8-tetrahydrofolate + H2O = 2-dehydropantoate + (6S)-5,6,7,8-tetrahydrofolate. It participates in cofactor biosynthesis; (R)-pantothenate biosynthesis; (R)-pantoate from 3-methyl-2-oxobutanoate: step 1/2. Catalyzes the reversible reaction in which hydroxymethyl group from 5,10-methylenetetrahydrofolate is transferred onto alpha-ketoisovalerate to form ketopantoate. This Bacillus cereus (strain ATCC 10987 / NRS 248) protein is 3-methyl-2-oxobutanoate hydroxymethyltransferase.